The primary structure comprises 189 residues: MNDIKPAIMMVLVFTIICGGIYPAVVTGIAQAVFPKEATGSFITDRSGREIGSALIGQPFSDSKYFWPRPSATTDFGYNPAASGGSNSGPTNPDYLKTVANRVKALKDTGVSTGIPTDLVQASASGLDPHISPEAASVQIPRVAKARGMMEDKVRRLVSGHTEDRQFGIIGSPRVNVLALNLALDRLAP.

A helical transmembrane segment spans residues 6–26 (PAIMMVLVFTIICGGIYPAVV).

The protein belongs to the KdpC family. In terms of assembly, the system is composed of three essential subunits: KdpA, KdpB and KdpC.

It localises to the cell inner membrane. In terms of biological role, part of the high-affinity ATP-driven potassium transport (or Kdp) system, which catalyzes the hydrolysis of ATP coupled with the electrogenic transport of potassium into the cytoplasm. This subunit acts as a catalytic chaperone that increases the ATP-binding affinity of the ATP-hydrolyzing subunit KdpB by the formation of a transient KdpB/KdpC/ATP ternary complex. In Geobacter metallireducens (strain ATCC 53774 / DSM 7210 / GS-15), this protein is Potassium-transporting ATPase KdpC subunit.